The chain runs to 194 residues: Imidazoleglycerol-phosphate dehydratase (194 aa).

This sequence belongs to the imidazoleglycerol-phosphate dehydratase family.

The protein resides in the cytoplasm. It catalyses the reaction D-erythro-1-(imidazol-4-yl)glycerol 3-phosphate = 3-(imidazol-4-yl)-2-oxopropyl phosphate + H2O. It functions in the pathway amino-acid biosynthesis; L-histidine biosynthesis; L-histidine from 5-phospho-alpha-D-ribose 1-diphosphate: step 6/9. This Lacticaseibacillus paracasei (strain ATCC 334 / BCRC 17002 / CCUG 31169 / CIP 107868 / KCTC 3260 / NRRL B-441) (Lactobacillus paracasei) protein is Imidazoleglycerol-phosphate dehydratase.